We begin with the raw amino-acid sequence, 151 residues long: Ribosomal RNA large subunit methyltransferase H (151 aa).

S-adenosyl-L-methionine contacts are provided by residues Leu73, Gly100, and 119-124 (LTKLTL).

The protein belongs to the RNA methyltransferase RlmH family. In terms of assembly, homodimer.

The protein localises to the cytoplasm. It catalyses the reaction pseudouridine(1915) in 23S rRNA + S-adenosyl-L-methionine = N(3)-methylpseudouridine(1915) in 23S rRNA + S-adenosyl-L-homocysteine + H(+). Functionally, specifically methylates the pseudouridine at position 1915 (m3Psi1915) in 23S rRNA. The polypeptide is Ribosomal RNA large subunit methyltransferase H (Campylobacter hominis (strain ATCC BAA-381 / DSM 21671 / CCUG 45161 / LMG 19568 / NCTC 13146 / CH001A)).